The sequence spans 154 residues: Transcriptional repressor NrdR (154 aa).

A zinc finger lies at 3 to 34; the sequence is CPFCGANDTKVIDSRLVAEGEQVRRRRECLAC. The ATP-cone domain occupies 49-139; the sequence is PRLIKTDGSR…VYRRFQDLNE (91 aa).

The protein belongs to the NrdR family. The cofactor is Zn(2+).

Negatively regulates transcription of bacterial ribonucleotide reductase nrd genes and operons by binding to NrdR-boxes. The polypeptide is Transcriptional repressor NrdR (Pseudomonas fluorescens (strain Pf0-1)).